A 462-amino-acid polypeptide reads, in one-letter code: Alkaline phosphatase 3 (462 aa).

Residues 1 to 32 (MKKFPKKLLPIAVLSSIAFSSLASGSVPEASA) form the signal peptide. Asp-52 is a binding site for Mg(2+). Asp-52 contacts Zn(2+). The Phosphoserine intermediate role is filled by Ser-101. The Mg(2+) site is built by Thr-154 and Glu-275. Residues Asp-280, His-284, Asp-322, His-323, and His-419 each coordinate Zn(2+).

It belongs to the alkaline phosphatase family. Monomer. It depends on Mg(2+) as a cofactor. The cofactor is Zn(2+).

The catalysed reaction is a phosphate monoester + H2O = an alcohol + phosphate. The sequence is that of Alkaline phosphatase 3 (phoB) from Bacillus subtilis (strain 168).